The following is a 180-amino-acid chain: UPF0227 protein YcfP (180 aa).

This sequence belongs to the UPF0227 family.

In Salmonella agona (strain SL483), this protein is UPF0227 protein YcfP.